Reading from the N-terminus, the 553-residue chain is Expansin-like protein 7 (553 aa).

Residues 1–19 (MRLLGSLILTLSLIASAFS) form the signal peptide. Residue Asn-39 is glycosylated (N-linked (GlcNAc...) asparagine). The Expansin-like EG45 domain maps to 41–139 (SGSCEYGAYN…RKVSCDASGP (99 aa)). Cystine bridges form between Cys-44-Cys-73 and Cys-76-Cys-134. N-linked (GlcNAc...) asparagine glycosylation is found at Asn-276, Asn-325, and Asn-406. Disordered stretches follow at residues 421 to 447 (GGSG…SSTA) and 460 to 531 (SSSA…DEHH). Low complexity-rich tracts occupy residues 460 to 476 (SSSA…AGGK) and 484 to 493 (ISTSGITGSG). Residues 497-516 (AASTSKTTSNPTGKTTGMTG) are compositionally biased toward polar residues. The segment covering 520 to 531 (DHSESHSSDEHH) has biased composition (basic and acidic residues).

This sequence belongs to the expansin family. Expansin A subfamily.

Its subcellular location is the secreted. Functionally, may serve to lubricate the movement of the cellulose microfibrils during cell growth and wall extension and/or may serve to maintain the fluid state of the slug cell wall. Overexpression shows aberrant stalk formation. The sequence is that of Expansin-like protein 7 (expl7) from Dictyostelium discoideum (Social amoeba).